A 213-amino-acid polypeptide reads, in one-letter code: Kynurenine formamidase (213 aa).

Tryptophan 20 is a substrate binding site. Positions 50, 54, and 56 each coordinate Zn(2+). Residue histidine 60 is the Proton donor/acceptor of the active site. Positions 161 and 173 each coordinate Zn(2+).

Belongs to the Cyclase 1 superfamily. KynB family. Homodimer. Requires Zn(2+) as cofactor.

The enzyme catalyses N-formyl-L-kynurenine + H2O = L-kynurenine + formate + H(+). It functions in the pathway amino-acid degradation; L-tryptophan degradation via kynurenine pathway; L-kynurenine from L-tryptophan: step 2/2. In terms of biological role, catalyzes the hydrolysis of N-formyl-L-kynurenine to L-kynurenine, the second step in the kynurenine pathway of tryptophan degradation. The polypeptide is Kynurenine formamidase (Pseudomonas aeruginosa (strain UCBPP-PA14)).